The following is a 434-amino-acid chain: Glutamate-1-semialdehyde 2,1-aminomutase 1 (434 aa).

Residue Lys270 is modified to N6-(pyridoxal phosphate)lysine.

It belongs to the class-III pyridoxal-phosphate-dependent aminotransferase family. HemL subfamily. As to quaternary structure, homodimer. Requires pyridoxal 5'-phosphate as cofactor.

It is found in the cytoplasm. The enzyme catalyses (S)-4-amino-5-oxopentanoate = 5-aminolevulinate. It functions in the pathway porphyrin-containing compound metabolism; protoporphyrin-IX biosynthesis; 5-aminolevulinate from L-glutamyl-tRNA(Glu): step 2/2. The protein is Glutamate-1-semialdehyde 2,1-aminomutase 1 of Bacillus cereus (strain AH187).